The sequence spans 315 residues: Kiwa protein KwaB (315 aa).

Component of antiviral defense system Kiwa, composed of KwaA and KwaB. Expression of Kiwa in E.coli (strain MG1655) confers resistance to phages lambda and SECphi18. The polypeptide is Kiwa protein KwaB (Escherichia coli O55:H7 (strain RM12579 / EPEC)).